The sequence spans 526 residues: Germ cell-less protein-like 2 (526 aa).

The disordered stretch occupies residues 1-85 (MGSSSSRVLG…DKQQPLLNTP (85 aa)). The short motif at 49 to 55 (SHKRKRS) is the Nuclear localization signal element. Residues 62–77 (CDPDSHREEHEEEGDK) show a composition bias toward basic and acidic residues. Positions 85 to 91 (PARKKLR) match the Nuclear localization signal motif. The BTB domain maps to 108–178 (SDIKICALGE…LYRDDVLIKP (71 aa)).

In terms of assembly, interacts with CUL3. In terms of tissue distribution, expressed predominantly in testis.

The protein localises to the nucleus matrix. It functions in the pathway protein modification; protein ubiquitination. Functionally, possible function in spermatogenesis. Probable substrate-specific adapter of an E3 ubiquitin-protein ligase complex which mediates the ubiquitination and subsequent proteasomal degradation of target proteins. The polypeptide is Germ cell-less protein-like 2 (Homo sapiens (Human)).